The chain runs to 305 residues: tRNA dimethylallyltransferase (305 aa).

Residue 11–18 coordinates ATP; that stretch reads GPTAVGKT. 13-18 provides a ligand contact to substrate; the sequence is TAVGKT. The segment at 36 to 39 is interaction with substrate tRNA; sequence DSMQ.

It belongs to the IPP transferase family. As to quaternary structure, monomer. It depends on Mg(2+) as a cofactor.

The enzyme catalyses adenosine(37) in tRNA + dimethylallyl diphosphate = N(6)-dimethylallyladenosine(37) in tRNA + diphosphate. Catalyzes the transfer of a dimethylallyl group onto the adenine at position 37 in tRNAs that read codons beginning with uridine, leading to the formation of N6-(dimethylallyl)adenosine (i(6)A). This chain is tRNA dimethylallyltransferase, found in Listeria monocytogenes serovar 1/2a (strain ATCC BAA-679 / EGD-e).